A 137-amino-acid polypeptide reads, in one-letter code: Nucleoside diphosphate kinase (137 aa).

The ATP site is built by Lys-9, Phe-57, Arg-85, Thr-91, Arg-102, and Asn-112. His-115 functions as the Pros-phosphohistidine intermediate in the catalytic mechanism.

This sequence belongs to the NDK family. In terms of assembly, homotetramer. Mg(2+) serves as cofactor.

The protein resides in the cytoplasm. The catalysed reaction is a 2'-deoxyribonucleoside 5'-diphosphate + ATP = a 2'-deoxyribonucleoside 5'-triphosphate + ADP. It catalyses the reaction a ribonucleoside 5'-diphosphate + ATP = a ribonucleoside 5'-triphosphate + ADP. Functionally, major role in the synthesis of nucleoside triphosphates other than ATP. The ATP gamma phosphate is transferred to the NDP beta phosphate via a ping-pong mechanism, using a phosphorylated active-site intermediate. The sequence is that of Nucleoside diphosphate kinase from Helicobacter hepaticus (strain ATCC 51449 / 3B1).